Reading from the N-terminus, the 213-residue chain is ATP phosphoribosyltransferase (213 aa).

The protein belongs to the ATP phosphoribosyltransferase family. Short subfamily. Heteromultimer composed of HisG and HisZ subunits.

Its subcellular location is the cytoplasm. It catalyses the reaction 1-(5-phospho-beta-D-ribosyl)-ATP + diphosphate = 5-phospho-alpha-D-ribose 1-diphosphate + ATP. Its pathway is amino-acid biosynthesis; L-histidine biosynthesis; L-histidine from 5-phospho-alpha-D-ribose 1-diphosphate: step 1/9. Functionally, catalyzes the condensation of ATP and 5-phosphoribose 1-diphosphate to form N'-(5'-phosphoribosyl)-ATP (PR-ATP). Has a crucial role in the pathway because the rate of histidine biosynthesis seems to be controlled primarily by regulation of HisG enzymatic activity. This is ATP phosphoribosyltransferase from Bacillus velezensis (strain DSM 23117 / BGSC 10A6 / LMG 26770 / FZB42) (Bacillus amyloliquefaciens subsp. plantarum).